The chain runs to 270 residues: 5'-AMP-activated protein kinase subunit beta-1 (270 aa).

The tract at residues 1-44 is disordered; that stretch reads MGNTSSERAALERQAGHKTPRRDSSGGAKDGDRPKILMDSPEDA. G2 carries the N-myristoyl glycine lipid modification. T4 is subject to Phosphothreonine. 2 positions are modified to phosphoserine: S5 and S6. Residues 9–36 show a composition bias toward basic and acidic residues; that stretch reads AALERQAGHKTPRRDSSGGAKDGDRPKI. A Phosphothreonine modification is found at T19. S24 and S25 each carry phosphoserine; by autocatalysis. 3 positions are modified to phosphoserine: S40, S96, and S101. The interval 68–163 is glycogen-binding domain; it reads EANDKAPAQA…QVKKTDFEVF (96 aa). S108 is modified (phosphoserine; by autocatalysis). At T148 the chain carries Phosphothreonine. S182 is subject to Phosphoserine. K201 bears the N6-succinyllysine mark.

It belongs to the 5'-AMP-activated protein kinase beta subunit family. AMPK is a heterotrimer of an alpha catalytic subunit (PRKAA1 or PRKAA2), a beta (PRKAB1 or PRKAB2) and a gamma non-catalytic subunits (PRKAG1, PRKAG2 or PRKAG3). Interacts with FNIP1 and FNIP2. Phosphorylated when associated with the catalytic subunit (PRKAA1 or PRKAA2). Phosphorylated by ULK1; leading to negatively regulate AMPK activity and suggesting the existence of a regulatory feedback loop between ULK1 and AMPK.

Functionally, non-catalytic subunit of AMP-activated protein kinase (AMPK), an energy sensor protein kinase that plays a key role in regulating cellular energy metabolism. In response to reduction of intracellular ATP levels, AMPK activates energy-producing pathways and inhibits energy-consuming processes: inhibits protein, carbohydrate and lipid biosynthesis, as well as cell growth and proliferation. AMPK acts via direct phosphorylation of metabolic enzymes, and by longer-term effects via phosphorylation of transcription regulators. Also acts as a regulator of cellular polarity by remodeling the actin cytoskeleton; probably by indirectly activating myosin. Beta non-catalytic subunit acts as a scaffold on which the AMPK complex assembles, via its C-terminus that bridges alpha (PRKAA1 or PRKAA2) and gamma subunits (PRKAG1, PRKAG2 or PRKAG3). The polypeptide is 5'-AMP-activated protein kinase subunit beta-1 (Prkab1) (Mus musculus (Mouse)).